A 450-amino-acid chain; its full sequence is Asparagine--tRNA ligase (450 aa).

The protein belongs to the class-II aminoacyl-tRNA synthetase family. In terms of assembly, homodimer.

The protein resides in the cytoplasm. The catalysed reaction is tRNA(Asn) + L-asparagine + ATP = L-asparaginyl-tRNA(Asn) + AMP + diphosphate + H(+). This chain is Asparagine--tRNA ligase, found in Metamycoplasma arthritidis (strain 158L3-1) (Mycoplasma arthritidis).